The chain runs to 248 residues: Pulmonary surfactant-associated protein A (248 aa).

Residues 1 to 20 form the signal peptide; it reads MWLCPLALTLTLMAASGAAC. One can recognise a Collagen-like domain in the interval 31-100; it reads GIPGTPGSHG…PGERGPPGLP (70 aa). Residues 33-100 form a disordered region; the sequence is PGTPGSHGLP…PGERGPPGLP (68 aa). The segment covering 42 to 51 has biased composition (basic and acidic residues); sequence PGRDGRDGVK. Residues 54 to 65 show a composition bias toward pro residues; sequence PGPPGPMGPPGD. The region spanning 134 to 247 is the C-type lectin domain; the sequence is IGGKVFSTNG…CLYNRLTICE (114 aa). Disulfide bonds link cysteine 155–cysteine 246 and cysteine 224–cysteine 238. An N-linked (GlcNAc...) asparagine glycan is attached at asparagine 207. Glutamate 215, alanine 217, asparagine 234, and aspartate 235 together coordinate Ca(2+).

This sequence belongs to the SFTPA family. In terms of assembly, oligomeric complex of 6 set of homotrimers.

The protein localises to the secreted. The protein resides in the extracellular space. It is found in the extracellular matrix. Its subcellular location is the surface film. Functionally, in presence of calcium ions, it binds to surfactant phospholipids and contributes to lower the surface tension at the air-liquid interface in the alveoli of the mammalian lung and is essential for normal respiration. Enhances the expression of MYO18A/SP-R210 on alveolar macrophages. In Macaca mulatta (Rhesus macaque), this protein is Pulmonary surfactant-associated protein A (SFTPA1).